The chain runs to 68 residues: Medusin-AS (68 aa).

Residues 1–22 form the signal peptide; the sequence is MAFLKKSLFLVLFLGLVSLSVC. Positions 23 to 49 are excised as a propeptide; sequence EEEKRESEEEKNEQEEDDRDERSEEKR. The interval 24 to 46 is disordered; it reads EEKRESEEEKNEQEEDDRDERSE. A compositionally biased stretch (acidic residues) spans 31–41; it reads EEKNEQEEDDR. Leucine 67 bears the Leucine amide mark.

The protein belongs to the frog skin active peptide (FSAP) family. Medusin subfamily. In terms of tissue distribution, expressed by the skin glands.

It localises to the secreted. In terms of biological role, antimicrobial peptide active against Gram-positive bacteria and fungi but inactive against Gram-negative bacteria. Also inhibits growth of B.dendrobatidis zoospores at high concentrations. Shows anticancer activities. Shows hemolytic activity. The protein is Medusin-AS of Agalychnis spurrelli (Gliding leaf frog).